A 98-amino-acid chain; its full sequence is MKAIVFVLIFAVAFAVTATHQGEILCNLCTGLINTLENLLTTKGADKVKDYISSLCNKASGFIATLCTKVLDFGIDKLIQLIEDKVDANAICAKIHAC.

The N-terminal stretch at 1 to 21 (MKAIVFVLIFAVAFAVTATHQ) is a signal peptide. In terms of domain architecture, Saposin B-type spans 22-98 (GEILCNLCTG…NAICAKIHAC (77 aa)). Disulfide bonds link Cys-26–Cys-98, Cys-29–Cys-92, and Cys-56–Cys-67.

In terms of assembly, monomer (at pH below 4 and pH above 6). Homodimer (at pH 4-6). Hexamer; formed during insertion in the membrane.

Its subcellular location is the cytoplasmic granule. In terms of biological role, forms pores in the cell membrane of host cells. Has antibacterial activity against M.luteus, no activity against E.coli. Implicated in the cytolytic activity of the parasite. The sequence is that of Pore-forming peptide amoebapore A from Entamoeba histolytica (strain ATCC 30459 / HM-1:IMSS / ABRM).